The primary structure comprises 615 residues: Zinc metalloproteinase R519 (615 aa).

In terms of domain architecture, Peptidase M13 spans 1-611; sequence MTYRSCIPQN…LDPQLRSRIL (611 aa). His454 contacts Zn(2+). Glu455 is a catalytic residue. Zn(2+) is bound by residues His458 and Glu513. Catalysis depends on Asp517, which acts as the Proton donor.

The protein belongs to the peptidase M13 family. The cofactor is Zn(2+).

Zinc metalloprotease. This Acanthamoeba polyphaga (Amoeba) protein is Zinc metalloproteinase R519.